The sequence spans 123 residues: Large ribosomal subunit protein uL18 (123 aa).

The protein belongs to the universal ribosomal protein uL18 family. As to quaternary structure, part of the 50S ribosomal subunit; part of the 5S rRNA/L5/L18/L25 subcomplex. Contacts the 5S and 23S rRNAs.

This is one of the proteins that bind and probably mediate the attachment of the 5S RNA into the large ribosomal subunit, where it forms part of the central protuberance. This is Large ribosomal subunit protein uL18 from Wolbachia sp. subsp. Brugia malayi (strain TRS).